The chain runs to 204 residues: uncharacterized protein (204 aa).

This is an uncharacterized protein from Stylonychia lemnae (Ciliate).